We begin with the raw amino-acid sequence, 724 residues long: 1,4-alpha-glucan branching enzyme GlgB 1 (724 aa).

Asp403 acts as the Nucleophile in catalysis. Catalysis depends on Glu456, which acts as the Proton donor.

It belongs to the glycosyl hydrolase 13 family. GlgB subfamily. In terms of assembly, monomer.

It carries out the reaction Transfers a segment of a (1-&gt;4)-alpha-D-glucan chain to a primary hydroxy group in a similar glucan chain.. Its pathway is glycan biosynthesis; glycogen biosynthesis. Its function is as follows. Catalyzes the formation of the alpha-1,6-glucosidic linkages in glycogen by scission of a 1,4-alpha-linked oligosaccharide from growing alpha-1,4-glucan chains and the subsequent attachment of the oligosaccharide to the alpha-1,6 position. The polypeptide is 1,4-alpha-glucan branching enzyme GlgB 1 (glgB1) (Xanthomonas axonopodis pv. citri (strain 306)).